The sequence spans 81 residues: Short neurotoxin B (81 aa).

A signal peptide spans 1-21; it reads MKTLLLTLVVVTIVCLDLGYT. Intrachain disulfides connect cysteine 24–cysteine 43, cysteine 38–cysteine 60, cysteine 62–cysteine 73, and cysteine 74–cysteine 79.

It belongs to the three-finger toxin family. Short-chain subfamily. Type I alpha-neurotoxin sub-subfamily. In terms of tissue distribution, expressed by the venom gland.

It localises to the secreted. Binds to muscle nicotinic acetylcholine receptor (nAChR) and inhibit acetylcholine from binding to the receptor, thereby impairing neuromuscular transmission. This chain is Short neurotoxin B, found in Aipysurus laevis (Olive sea snake).